The following is a 488-amino-acid chain: Cytochrome P450 monooxygenase orf2 (488 aa).

Residues 7-27 (LPGIFLPLAGCVLALSLTTIV) form a helical membrane-spanning segment. Residue cysteine 432 participates in heme binding.

The protein belongs to the cytochrome P450 family. The cofactor is heme.

It localises to the membrane. The protein operates within secondary metabolite biosynthesis. Functionally, cytochrome P450 monooxygenase; part of the gene cluster that mediates the biosynthesis of nigerpyrone and its derivatives carbonarone A and pestalamide A. The biosynthesis pathway begins with the polyketide assembly by epaA to form phenylacetyl triketide precursor from successive condensation of two malonyl-CoA, presumably with one phenylacetyl-CoA starter unit produced by the phenylacetyl-CoA ligase epaB. For the nigerpyrone biosynthesis, the reactive polyketide chain is released as an aldehyde through the R-domain. A nonenzymatic cyclization and dehydration may create nigerpyrone. For the biosynthesis of carbonarone A and pestalamide A, an extra methyl group is added through the C-methyltransferase domain. Several further steps involving the dehydrogenase orf1, the cytochrome P450 monooxygenase orf2 and the FAD-dependent monooxygenase orf3 are required to form a carbonarone A precursor which is converted to carbonarone A via cyclization. The O-acetyltransferase epaC could catalyze the transfer of 2-methylsuccinyl-CoA, a common intermediate in the ethylmalonyl-CoA pathway, to generate the final product pestalamide A. The sequence is that of Cytochrome P450 monooxygenase orf2 from Aspergillus niger (strain ATCC MYA-4892 / CBS 513.88 / FGSC A1513).